The primary structure comprises 464 residues: Glutamate--tRNA ligase 1 (464 aa).

Positions 8–18 (PSPTGHLHVGG) match the 'HIGH' region motif. Positions 231 to 235 (PLSKR) match the 'KMSKS' region motif. Lysine 234 is an ATP binding site.

This sequence belongs to the class-I aminoacyl-tRNA synthetase family. Glutamate--tRNA ligase type 1 subfamily. As to quaternary structure, monomer.

It is found in the cytoplasm. The catalysed reaction is tRNA(Glu) + L-glutamate + ATP = L-glutamyl-tRNA(Glu) + AMP + diphosphate. In terms of biological role, catalyzes the attachment of glutamate to tRNA(Glu) in a two-step reaction: glutamate is first activated by ATP to form Glu-AMP and then transferred to the acceptor end of tRNA(Glu). This is Glutamate--tRNA ligase 1 from Thermotoga sp. (strain RQ2).